Reading from the N-terminus, the 134-residue chain is UPF0102 protein Rmet_3430 (134 aa).

It belongs to the UPF0102 family.

This Cupriavidus metallidurans (strain ATCC 43123 / DSM 2839 / NBRC 102507 / CH34) (Ralstonia metallidurans) protein is UPF0102 protein Rmet_3430.